Consider the following 88-residue polypeptide: LYR motif-containing protein 2 (88 aa).

Residues 1–19 (MAASRLPPATLTLKQFVRR) constitute a mitochondrion transit peptide.

This sequence belongs to the complex I LYR family.

The protein resides in the mitochondrion. Its function is as follows. Involved in efficient integration of the N-module into mitochondrial respiratory chain complex I. This chain is LYR motif-containing protein 2 (LYRM2), found in Homo sapiens (Human).